We begin with the raw amino-acid sequence, 77 residues long: Large ribosomal subunit protein uL29 (77 aa).

The protein belongs to the universal ribosomal protein uL29 family.

The chain is Large ribosomal subunit protein uL29 from Gluconobacter oxydans (strain 621H) (Gluconobacter suboxydans).